The following is an 81-amino-acid chain: Sulfur carrier protein TusA (81 aa).

The active-site Cysteine persulfide intermediate is Cys19.

Belongs to the sulfur carrier protein TusA family. As to quaternary structure, interacts with IscS.

The protein localises to the cytoplasm. Its pathway is tRNA modification. Sulfur carrier protein involved in sulfur trafficking in the cell. Part of a sulfur-relay system required for 2-thiolation during synthesis of 2-thiouridine of the modified wobble base 5-methylaminomethyl-2-thiouridine (mnm(5)s(2)U) in tRNA. Interacts with IscS and stimulates its cysteine desulfurase activity. Accepts an activated sulfur from IscS, which is then transferred to TusD, and thus determines the direction of sulfur flow from IscS to 2-thiouridine formation. Also appears to be involved in sulfur transfer for the biosynthesis of molybdopterin. This chain is Sulfur carrier protein TusA, found in Escherichia fergusonii (strain ATCC 35469 / DSM 13698 / CCUG 18766 / IAM 14443 / JCM 21226 / LMG 7866 / NBRC 102419 / NCTC 12128 / CDC 0568-73).